A 237-amino-acid chain; its full sequence is Eukaryotic translation initiation factor 3 subunit J (237 aa).

The interval 20-64 (ANNINKWEGEDDDEDVKESWEDEEEKKDEEKPTKTEAPAKTKPNK) is disordered. Over residues 28–46 (GEDDDEDVKESWEDEEEKK) the composition is skewed to acidic residues. The span at 47-58 (DEEKPTKTEAPA) shows a compositional bias: basic and acidic residues. A coiled-coil region spans residues 63–115 (NKVLKAKLLEQECLEKEEEAKRLANMSTEEKLAEKLRLQKIQEESDLKSALET).

It belongs to the eIF-3 subunit J family. Component of the eukaryotic translation initiation factor 3 (eIF-3) complex. The eIF-3 complex interacts with pix.

The protein localises to the cytoplasm. Component of the eukaryotic translation initiation factor 3 (eIF-3) complex, which is involved in protein synthesis of a specialized repertoire of mRNAs and, together with other initiation factors, stimulates binding of mRNA and methionyl-tRNAi to the 40S ribosome. The eIF-3 complex specifically targets and initiates translation of a subset of mRNAs involved in cell proliferation. This chain is Eukaryotic translation initiation factor 3 subunit J, found in Drosophila grimshawi (Hawaiian fruit fly).